Here is a 212-residue protein sequence, read N- to C-terminus: Thiamine-phosphate synthase (212 aa).

38 to 42 (QLREK) is a 4-amino-2-methyl-5-(diphosphooxymethyl)pyrimidine binding site. Mg(2+) contacts are provided by aspartate 71 and aspartate 90. 4-amino-2-methyl-5-(diphosphooxymethyl)pyrimidine is bound at residue lysine 138. Glycine 166 contributes to the 2-[(2R,5Z)-2-carboxy-4-methylthiazol-5(2H)-ylidene]ethyl phosphate binding site.

Belongs to the thiamine-phosphate synthase family. The cofactor is Mg(2+).

It carries out the reaction 2-[(2R,5Z)-2-carboxy-4-methylthiazol-5(2H)-ylidene]ethyl phosphate + 4-amino-2-methyl-5-(diphosphooxymethyl)pyrimidine + 2 H(+) = thiamine phosphate + CO2 + diphosphate. The enzyme catalyses 2-(2-carboxy-4-methylthiazol-5-yl)ethyl phosphate + 4-amino-2-methyl-5-(diphosphooxymethyl)pyrimidine + 2 H(+) = thiamine phosphate + CO2 + diphosphate. The catalysed reaction is 4-methyl-5-(2-phosphooxyethyl)-thiazole + 4-amino-2-methyl-5-(diphosphooxymethyl)pyrimidine + H(+) = thiamine phosphate + diphosphate. The protein operates within cofactor biosynthesis; thiamine diphosphate biosynthesis; thiamine phosphate from 4-amino-2-methyl-5-diphosphomethylpyrimidine and 4-methyl-5-(2-phosphoethyl)-thiazole: step 1/1. Functionally, condenses 4-methyl-5-(beta-hydroxyethyl)thiazole monophosphate (THZ-P) and 2-methyl-4-amino-5-hydroxymethyl pyrimidine pyrophosphate (HMP-PP) to form thiamine monophosphate (TMP). In Chlamydia caviae (strain ATCC VR-813 / DSM 19441 / 03DC25 / GPIC) (Chlamydophila caviae), this protein is Thiamine-phosphate synthase.